We begin with the raw amino-acid sequence, 452 residues long: Neuromedin-K receptor (452 aa).

Topologically, residues 1-71 are extracellular; that stretch reads MASVPTGENW…TNQFVQPSWR (71 aa). Residues N9, N23, N40, and N60 are each glycosylated (N-linked (GlcNAc...) asparagine). Residues 72–94 form a helical membrane-spanning segment; that stretch reads IALWSLAYGLVVAVAVFGNLIVI. The Cytoplasmic segment spans residues 95–104; the sequence is WIILAHKRMR. Residues 105 to 126 form a helical membrane-spanning segment; it reads TVTNYFLVNLAFSDASVAAFNT. At 127 to 146 the chain is on the extracellular side; sequence LVNFIYGVHSEWYFGANYCR. A disulfide bridge connects residues C145 and C220. Residues 147-168 form a helical membrane-spanning segment; it reads FQNFFPITAVFASIYSMTAIAV. Over 169–188 the chain is Cytoplasmic; sequence DRYMAIIDPLKPRLSATATK. A helical membrane pass occupies residues 189–209; sequence IVIGSIWILAFLLAFPQCLYS. The Extracellular portion of the chain corresponds to 210–232; sequence KIKVMPGRTLCYVQWPEGPKQHF. A helical transmembrane segment spans residues 233-257; that stretch reads TYHIIVIILVYCFPLLIMGVTYTIV. At 258–286 the chain is on the cytoplasmic side; that stretch reads GITLWGGEIPGDTCDKYHEQLKAKRKVVK. Residues 287-308 form a helical membrane-spanning segment; sequence MMIIVVVTFAICWLPYHVYFIL. The Extracellular segment spans residues 309 to 321; sequence TAIYQQLNRWKYI. Residues 322–346 traverse the membrane as a helical segment; that stretch reads QQVYLASFWLAMSSTMYNPIIYCCL. The Cytoplasmic portion of the chain corresponds to 347–452; that stretch reads NKRFRAGFKR…SPYTSVDEYS (106 aa). C361 carries S-palmitoyl cysteine lipidation. Residues 401–452 form a disordered region; that stretch reads DPSEGDPAKSSRKKRAVPRDPSANGCSHREFKSASTTSSFISSPYTSVDEYS. A compositionally biased stretch (low complexity) spans 433 to 452; the sequence is SASTTSSFISSPYTSVDEYS.

The protein belongs to the G-protein coupled receptor 1 family. In terms of processing, the anchoring of this receptor to the plasma membrane is probably mediated by the palmitoylation of a cysteine residue.

Its subcellular location is the cell membrane. This is a receptor for the tachykinin neuropeptide neuromedin-K (neurokinin B). It is associated with G proteins that activate a phosphatidylinositol-calcium second messenger system. This chain is Neuromedin-K receptor (Tacr3), found in Mus musculus (Mouse).